Consider the following 949-residue polypeptide: ATPase 6, plasma membrane-type (949 aa).

The Cytoplasmic portion of the chain corresponds to 1–64 (MAADISWDEI…EKVENKFLKF (64 aa)). A helical membrane pass occupies residues 65 to 84 (LGFMWNPLSWVMEAAAIMAI). Over 85–96 (VLANGGGRPPDW) the chain is Extracellular. The helical transmembrane segment at 97 to 117 (QDFVGITCLLIINSTISFIEE) threads the bilayer. The Cytoplasmic portion of the chain corresponds to 118–246 (NNAGNAAAAL…GHFQKVLTAI (129 aa)). The chain crosses the membrane as a helical span at residues 247–267 (GNFCICSIGIGMLIEIIIMYP). The Extracellular segment spans residues 268–276 (IQHRKYRDG). A helical transmembrane segment spans residues 277 to 294 (IDNLLVLLIGGIPIAMPT). The Cytoplasmic segment spans residues 295–645 (VLSVTMAIGS…TSRAIFQRMK (351 aa)). Aspartate 332 acts as the 4-aspartylphosphate intermediate in catalysis. Mg(2+) is bound by residues aspartate 590 and aspartate 594. A helical membrane pass occupies residues 646–667 (NYTIYAVSITIRIVLGFMLVAL). Residues 668–672 (IWEFD) are Extracellular-facing. A helical transmembrane segment spans residues 673–695 (FSPFMVLIIAILNDGTIMTISKD). The Cytoplasmic segment spans residues 696–711 (RVKPSPIPDSWKLKEI). A helical membrane pass occupies residues 712-732 (FATGVVLGTYMALVTVVFFWL). Residues 733 to 753 (AHDTTFFSDKFGVRSLQGKDE) lie on the Extracellular side of the membrane. The helical transmembrane segment at 754-774 (ELIAVLYLQVSIISQALIFVT) threads the bilayer. Topologically, residues 775–786 (RSRSWSFVERPG) are cytoplasmic. A helical transmembrane segment spans residues 787-807 (LLLLIAFFVAQLIATLIATYA). The Extracellular portion of the chain corresponds to 808–815 (HWEFARIK). The chain crosses the membrane as a helical span at residues 816–836 (GCGWGWCGVIWIYSIVTYIPL). The Cytoplasmic segment spans residues 837–949 (DILKFITRYT…IDNLNQHYTV (113 aa)). At threonine 883 the chain carries Phosphothreonine. Serine 931 is modified (phosphoserine). The interval 947–949 (YTV) is interaction with 14-3-3 proteins. Position 948 is a phosphothreonine (threonine 948).

This sequence belongs to the cation transport ATPase (P-type) (TC 3.A.3) family. Type IIIA subfamily. As to quaternary structure, binds to 14-3-3 proteins. The binding is induced by phosphorylation of Thr-948. Binding to 14-3-3 proteins activates the H(+)-ATPase. In terms of tissue distribution, expressed in guard cells.

The protein resides in the membrane. It catalyses the reaction ATP + H2O + H(+)(in) = ADP + phosphate + 2 H(+)(out). The plasma membrane H(+) ATPase of plants and fungi generates a proton gradient that drives the active transport of nutrients by H(+)-symport. The resulting external acidification and/or internal alkinization may mediate growth responses. The protein is ATPase 6, plasma membrane-type (AHA6) of Arabidopsis thaliana (Mouse-ear cress).